The following is a 57-amino-acid chain: COP9 signalosome complex subunit 9 (57 aa).

This sequence belongs to the CSN9 family. In terms of assembly, component of the CSN complex, probably composed of cops1, cops2, cops3, cops4, cops5, cops6, cops7, cops8 and cops9.

The protein resides in the nucleus. The protein localises to the cytoplasm. Its subcellular location is the nucleoplasm. In terms of biological role, component of the COP9 signalosome complex (CSN), a complex involved in various cellular and developmental processes. The CSN complex is an essential regulator of the ubiquitin (Ubl) conjugation pathway by mediating the deneddylation of the cullin subunits of SCF-type E3 ligase complexes, leading to decrease the Ubl ligase activity. May play a role in cell proliferation. The protein is COP9 signalosome complex subunit 9 of Danio rerio (Zebrafish).